A 191-amino-acid polypeptide reads, in one-letter code: uncharacterized protein (191 aa).

This is an uncharacterized protein from Archaeoglobus fulgidus (strain ATCC 49558 / DSM 4304 / JCM 9628 / NBRC 100126 / VC-16).